A 326-amino-acid chain; its full sequence is Isopenicillin N synthase (326 aa).

Residues Arg84, Tyr88, and Tyr186 each contribute to the isopenicillin N site. N-[(5S)-5-amino-5-carboxypentanoyl]-L-cysteinyl-D-valine is bound by residues Arg84, Tyr88, Tyr186, His209, and Asp211. Positions 183 to 283 (LIRYPFLENY…RLSIPFFANL (101 aa)) constitute a Fe2OG dioxygenase domain. Residues His209, Asp211, and His265 each coordinate Fe(2+). Arg274 is a binding site for 2-oxoglutarate. Position 276 (Ser276) interacts with isopenicillin N. Ser276 provides a ligand contact to N-[(5S)-5-amino-5-carboxypentanoyl]-L-cysteinyl-D-valine.

It belongs to the iron/ascorbate-dependent oxidoreductase family. The cofactor is Fe cation. L-ascorbate is required as a cofactor.

It catalyses the reaction N-[(5S)-5-amino-5-carboxypentanoyl]-L-cysteinyl-D-valine + O2 = isopenicillin N + 2 H2O. Its pathway is antibiotic biosynthesis; penicillin G biosynthesis; penicillin G from L-alpha-aminoadipate and L-cysteine and L-valine: step 2/3. In terms of biological role, removes, in the presence of oxygen, 4 hydrogen atoms from delta-L-(alpha-aminoadipyl)-L-cysteinyl-D-valine (ACV) to form the azetidinone and thiazolidine rings of isopenicillin. The chain is Isopenicillin N synthase (pcbC) from Lysobacter lactamgenus.